A 339-amino-acid polypeptide reads, in one-letter code: NADH-quinone oxidoreductase subunit H (339 aa).

Transmembrane regions (helical) follow at residues isoleucine 9 to cysteine 29, proline 50 to phenylalanine 70, isoleucine 82 to isoleucine 102, valine 115 to glycine 135, methionine 161 to isoleucine 181, methionine 187 to leucine 207, methionine 235 to threonine 255, isoleucine 275 to isoleucine 295, and glycine 311 to valine 331.

The protein belongs to the complex I subunit 1 family. As to quaternary structure, NDH-1 is composed of 14 different subunits. Subunits NuoA, H, J, K, L, M, N constitute the membrane sector of the complex.

The protein localises to the cell inner membrane. It catalyses the reaction a quinone + NADH + 5 H(+)(in) = a quinol + NAD(+) + 4 H(+)(out). NDH-1 shuttles electrons from NADH, via FMN and iron-sulfur (Fe-S) centers, to quinones in the respiratory chain. The immediate electron acceptor for the enzyme in this species is believed to be ubiquinone. Couples the redox reaction to proton translocation (for every two electrons transferred, four hydrogen ions are translocated across the cytoplasmic membrane), and thus conserves the redox energy in a proton gradient. This subunit may bind ubiquinone. This Rickettsia conorii (strain ATCC VR-613 / Malish 7) protein is NADH-quinone oxidoreductase subunit H.